We begin with the raw amino-acid sequence, 311 residues long: N-acetyl-gamma-glutamyl-phosphate reductase (311 aa).

Cys-117 is a catalytic residue.

It belongs to the NAGSA dehydrogenase family. Type 2 subfamily.

The protein resides in the cytoplasm. The enzyme catalyses N-acetyl-L-glutamate 5-semialdehyde + phosphate + NADP(+) = N-acetyl-L-glutamyl 5-phosphate + NADPH + H(+). It functions in the pathway amino-acid biosynthesis; L-arginine biosynthesis; N(2)-acetyl-L-ornithine from L-glutamate: step 3/4. Its function is as follows. Catalyzes the NADPH-dependent reduction of N-acetyl-5-glutamyl phosphate to yield N-acetyl-L-glutamate 5-semialdehyde. In Brucella anthropi (strain ATCC 49188 / DSM 6882 / CCUG 24695 / JCM 21032 / LMG 3331 / NBRC 15819 / NCTC 12168 / Alc 37) (Ochrobactrum anthropi), this protein is N-acetyl-gamma-glutamyl-phosphate reductase.